The sequence spans 511 residues: Probable lipid II flippase MurJ (511 aa).

Helical transmembrane passes span 25–45, 85–105, 133–153, 156–178, 245–265, 271–291, 315–335, 356–376, 400–420, 442–462, and 481–501; these read DILI…FISF, SSIL…GGFF, IMFP…ILNS, YFSI…SVFF, ISLI…ISWI, LIEF…FTSL, LIVS…VIIV, LYSC…AFYA, FLIF…TSWV, FIFI…LFVV, and LFFG…ILGI.

This sequence belongs to the MurJ/MviN family.

The protein resides in the cell inner membrane. It functions in the pathway cell wall biogenesis; peptidoglycan biosynthesis. In terms of biological role, involved in peptidoglycan biosynthesis. Transports lipid-linked peptidoglycan precursors from the inner to the outer leaflet of the cytoplasmic membrane. The protein is Probable lipid II flippase MurJ of Buchnera aphidicola subsp. Acyrthosiphon pisum (strain APS) (Acyrthosiphon pisum symbiotic bacterium).